A 37-amino-acid polypeptide reads, in one-letter code: Large ribosomal subunit protein bL36 (37 aa).

4 residues coordinate Zn(2+): cysteine 11, cysteine 14, cysteine 27, and histidine 32.

It belongs to the bacterial ribosomal protein bL36 family. In terms of assembly, part of the 50S ribosomal subunit. The cofactor is Zn(2+).

In terms of biological role, binds the 23S rRNA. This chain is Large ribosomal subunit protein bL36 (rpmJ), found in Deinococcus radiodurans (strain ATCC 13939 / DSM 20539 / JCM 16871 / CCUG 27074 / LMG 4051 / NBRC 15346 / NCIMB 9279 / VKM B-1422 / R1).